A 345-amino-acid polypeptide reads, in one-letter code: Phenylalanine--tRNA ligase alpha subunit (345 aa).

Glu-259 contacts Mg(2+).

This sequence belongs to the class-II aminoacyl-tRNA synthetase family. Phe-tRNA synthetase alpha subunit type 1 subfamily. Tetramer of two alpha and two beta subunits. It depends on Mg(2+) as a cofactor.

Its subcellular location is the cytoplasm. The catalysed reaction is tRNA(Phe) + L-phenylalanine + ATP = L-phenylalanyl-tRNA(Phe) + AMP + diphosphate + H(+). The chain is Phenylalanine--tRNA ligase alpha subunit from Lactococcus lactis subsp. cremoris (strain MG1363).